The primary structure comprises 261 residues: NAD(P)H-quinone oxidoreductase subunit K, chloroplastic (261 aa).

Positions 43, 44, 108, and 139 each coordinate [4Fe-4S] cluster.

The protein belongs to the complex I 20 kDa subunit family. In terms of assembly, NDH is composed of at least 16 different subunits, 5 of which are encoded in the nucleus. The cofactor is [4Fe-4S] cluster.

The protein localises to the plastid. Its subcellular location is the chloroplast thylakoid membrane. It carries out the reaction a plastoquinone + NADH + (n+1) H(+)(in) = a plastoquinol + NAD(+) + n H(+)(out). The enzyme catalyses a plastoquinone + NADPH + (n+1) H(+)(in) = a plastoquinol + NADP(+) + n H(+)(out). Its function is as follows. NDH shuttles electrons from NAD(P)H:plastoquinone, via FMN and iron-sulfur (Fe-S) centers, to quinones in the photosynthetic chain and possibly in a chloroplast respiratory chain. The immediate electron acceptor for the enzyme in this species is believed to be plastoquinone. Couples the redox reaction to proton translocation, and thus conserves the redox energy in a proton gradient. In Cycas taitungensis (Prince sago), this protein is NAD(P)H-quinone oxidoreductase subunit K, chloroplastic.